Here is a 380-residue protein sequence, read N- to C-terminus: Lipid-A-disaccharide synthase (380 aa).

It belongs to the LpxB family.

It catalyses the reaction a lipid X + a UDP-2-N,3-O-bis[(3R)-3-hydroxyacyl]-alpha-D-glucosamine = a lipid A disaccharide + UDP + H(+). It participates in bacterial outer membrane biogenesis; LPS lipid A biosynthesis. Its function is as follows. Condensation of UDP-2,3-diacylglucosamine and 2,3-diacylglucosamine-1-phosphate to form lipid A disaccharide, a precursor of lipid A, a phosphorylated glycolipid that anchors the lipopolysaccharide to the outer membrane of the cell. This Photobacterium profundum (strain SS9) protein is Lipid-A-disaccharide synthase.